The chain runs to 279 residues: Aldo-keto reductase Mvan_2161 (279 aa).

Catalysis depends on Y54, which acts as the Proton donor. Positions 194, 196, 232, 234, 235, 240, 243, 244, and 270 each coordinate NADPH.

It belongs to the aldo/keto reductase family.

The sequence is that of Aldo-keto reductase Mvan_2161 from Mycolicibacterium vanbaalenii (strain DSM 7251 / JCM 13017 / BCRC 16820 / KCTC 9966 / NRRL B-24157 / PYR-1) (Mycobacterium vanbaalenii).